The following is a 163-amino-acid chain: MVKKNSSKAAPATIARNKRATFEYRFEEKMEAGLSLMGWEVKSIRMGKVNLSDCYVFLKNGEAFMHGCTIIPLNTASTHVVCDPLRLKKLLLSRKELDKLAGLVERQGYSIIPISMYWRKGAWVKVEIGLGKGKKDHDKREDTKAREWEVEKARVMKKEKTHG.

Belongs to the SmpB family.

The protein localises to the cytoplasm. In terms of biological role, required for rescue of stalled ribosomes mediated by trans-translation. Binds to transfer-messenger RNA (tmRNA), required for stable association of tmRNA with ribosomes. tmRNA and SmpB together mimic tRNA shape, replacing the anticodon stem-loop with SmpB. tmRNA is encoded by the ssrA gene; the 2 termini fold to resemble tRNA(Ala) and it encodes a 'tag peptide', a short internal open reading frame. During trans-translation Ala-aminoacylated tmRNA acts like a tRNA, entering the A-site of stalled ribosomes, displacing the stalled mRNA. The ribosome then switches to translate the ORF on the tmRNA; the nascent peptide is terminated with the 'tag peptide' encoded by the tmRNA and targeted for degradation. The ribosome is freed to recommence translation, which seems to be the essential function of trans-translation. The chain is SsrA-binding protein from Shewanella baltica (strain OS223).